The following is a 66-amino-acid chain: U1-theraphotoxin-Cg1d 1 (66 aa).

A signal peptide spans 1 to 21 (MKMSALFVIFGLALLFCNSFA). Positions 22-29 (AELKATGR) are excised as a propeptide. 3 disulfide bridges follow: Cys-31/Cys-46, Cys-38/Cys-51, and Cys-45/Cys-58. Pro-63 carries the post-translational modification Proline amide.

It belongs to the neurotoxin 10 (Hwtx-1) family. 46 (Jztx-7/10/12) subfamily. As to expression, expressed by the venom gland.

Its subcellular location is the secreted. Its function is as follows. Probable ion channel inhibitor. This is U1-theraphotoxin-Cg1d 1 from Chilobrachys guangxiensis (Chinese earth tiger tarantula).